The following is a 415-amino-acid chain: SNF1 protein kinase subunit beta-2 (415 aa).

Disordered regions lie at residues 1 to 43 (MGTT…EMDA), 55 to 158 (KCSD…PSEI), and 249 to 276 (EKNPTNEKIRSKEADSMRPPTSDRSSIA). Gly-2 carries the N-myristoyl glycine lipid modification. Positions 9-19 (AQKKQTTKKCR) are enriched in basic residues. The span at 55-69 (KCSDSQDAGQPSREG) shows a compositional bias: polar residues. A Phosphoserine modification is found at Ser-66. Composition is skewed to basic and acidic residues over residues 122–150 (PKQDASPDDDRSGHSSPREEGQQQIRAKE) and 249–264 (EKNPTNEKIRSKEADS). The interval 154 to 335 (GPSEIKSSLM…LDRQQSNTDT (182 aa)) is kinase-interacting sequence (KIS); required for interaction with SNF1. Ser-298 carries the post-translational modification Phosphoserine. The segment at 336 to 415 (SWLTPPQLPP…QILYTPIESS (80 aa)) is association with SNF1 kinase complex (ASC) domain; required for interaction with SNF4.

It belongs to the 5'-AMP-activated protein kinase beta subunit family. In terms of assembly, component of the SNF1 kinase complex, a heterotrimeric complex composed of the catalytic alpha subunit SNF1, one of the three related beta subunits SIP1, SIP2 or GAL83, and the regulatory gamma subunit SNF4. The beta subunit serves as a bridge between the catalytic and the regulatory subunit. Interacts (via KIS domain) with SNF1. Interacts (via ASC domain) with SNF4. In terms of processing, phosphorylated by SNF1 in vitro.

The protein resides in the cytoplasm. It is found in the cell membrane. In terms of biological role, beta subunit of the SNF1 kinase complex, which is required for transcriptional, metabolic, and developmental adaptations in response to glucose limitation. Has a structural role, mediating heterotrimer formation, and a regulatory role, defining carbon source-regulated subcellular location and substrate specificity of the SNF1 kinase complex. Involved in the regulation of aging. Acts as a negative regulator of nuclear SNF1 activity in young cells by sequestering its activating gamma subunit at the plasma membrane. This chain is SNF1 protein kinase subunit beta-2 (SIP2), found in Saccharomyces cerevisiae (strain ATCC 204508 / S288c) (Baker's yeast).